A 98-amino-acid polypeptide reads, in one-letter code: Small ribosomal subunit protein bS20 (98 aa).

Belongs to the bacterial ribosomal protein bS20 family.

In terms of biological role, binds directly to 16S ribosomal RNA. The chain is Small ribosomal subunit protein bS20 from Kosmotoga olearia (strain ATCC BAA-1733 / DSM 21960 / TBF 19.5.1).